Consider the following 324-residue polypeptide: Pseudouridine-5'-phosphate glycosidase (324 aa).

The active-site Proton donor is glutamate 43. Positions 104 and 124 each coordinate substrate. Aspartate 156 lines the Mn(2+) pocket. 158 to 160 (SAD) is a substrate binding site. Catalysis depends on lysine 177, which acts as the Nucleophile.

Belongs to the pseudouridine-5'-phosphate glycosidase family. Homotrimer. The cofactor is Mn(2+).

It catalyses the reaction D-ribose 5-phosphate + uracil = psi-UMP + H2O. Catalyzes the reversible cleavage of pseudouridine 5'-phosphate (PsiMP) to ribose 5-phosphate and uracil. Functions biologically in the cleavage direction, as part of a pseudouridine degradation pathway. This is Pseudouridine-5'-phosphate glycosidase from Salinispora tropica (strain ATCC BAA-916 / DSM 44818 / JCM 13857 / NBRC 105044 / CNB-440).